A 156-amino-acid chain; its full sequence is Ribosomal RNA large subunit methyltransferase H (156 aa).

Residues L73, G104, and 123-128 contribute to the S-adenosyl-L-methionine site; that span reads LSPLTF.

Belongs to the RNA methyltransferase RlmH family. As to quaternary structure, homodimer.

It is found in the cytoplasm. The enzyme catalyses pseudouridine(1915) in 23S rRNA + S-adenosyl-L-methionine = N(3)-methylpseudouridine(1915) in 23S rRNA + S-adenosyl-L-homocysteine + H(+). Its function is as follows. Specifically methylates the pseudouridine at position 1915 (m3Psi1915) in 23S rRNA. In Thioalkalivibrio sulfidiphilus (strain HL-EbGR7), this protein is Ribosomal RNA large subunit methyltransferase H.